The chain runs to 99 residues: UPF0213 protein spr1390 (99 aa).

The 76-residue stretch at His-3–Glu-78 folds into the GIY-YIG domain.

The protein belongs to the UPF0213 family.

The protein is UPF0213 protein spr1390 of Streptococcus pneumoniae (strain ATCC BAA-255 / R6).